Reading from the N-terminus, the 521-residue chain is Anaerobic nitric oxide reductase flavorubredoxin (521 aa).

Residues 30 to 210 form a zinc metallo-hydrolase region; that stretch reads HKGTSYNSYL…PFSPLVTAKI (181 aa). The Fe cation site is built by His-79, Glu-81, Asp-83, His-147, Asp-166, and His-227. Residues 254–393 form the Flavodoxin-like domain; sequence ITLFYDSMSN…LCREHGRQLA (140 aa). FMN is bound by residues 260 to 264 and 342 to 369; these read SMSNN and AFGS…DISI. Positions 464–515 constitute a Rubredoxin-like domain; that stretch reads DQPMLCTVCQWIYDPALGEPDQLVAPGTPWARVPDSFLCPGCGIGKEVFEPC. Fe cation is bound by residues Cys-469, Cys-472, Cys-502, and Cys-505.

In the N-terminal section; belongs to the zinc metallo-hydrolase group 3 family. As to quaternary structure, homotetramer. Fe cation serves as cofactor. FMN is required as a cofactor.

It localises to the cytoplasm. Its pathway is nitrogen metabolism; nitric oxide reduction. Its function is as follows. Anaerobic nitric oxide reductase; uses NADH to detoxify nitric oxide (NO), protecting several 4Fe-4S NO-sensitive enzymes. Has at least 2 reductase partners, only one of which (NorW, flavorubredoxin reductase) has been identified. NO probably binds to the di-iron center; electrons enter from the NorW at rubredoxin and are transferred sequentially to the FMN center and the di-iron center. Also able to function as an aerobic oxygen reductase. The sequence is that of Anaerobic nitric oxide reductase flavorubredoxin from Aeromonas salmonicida (strain A449).